Reading from the N-terminus, the 513-residue chain is rRNA N(6)-adenosine-methyltransferase ZCCHC4 (513 aa).

Zn(2+)-binding residues include C40, H42, C64, C73, C125, C128, H140, and H143. The GRF-type zinc finger occupies 40–82 (CPHGPTLLFVKVTQGKEETRRFYACSACRDRKDCNFFQWEDEK). S-adenosyl-L-methionine-binding positions include 172–175 (QYLF), R202, D225, 243–244 (NM), and D276. Residues 337-357 (QVDYDNHALYKHGKTGRKQSP) form a regulatory loop region. Zn(2+) is bound by residues C380, C383, H393, C394, C397, C400, H410, C411, C414, C417, H424, C425, C428, C431, H436, and C438. In terms of domain architecture, DHHC spans 395 to 447 (ELCNSCTSKDGRKWNHCFLCKKCVKPSWIHCSICNHCAVPDHSCEGPKHGCFI). The segment at 443–460 (HGCFICGELDHKRSTCPN) adopts a CCHC-type zinc-finger fold. Residues 466-481 (RANKAVRKQKQRKSNK) show a composition bias toward basic residues. The disordered stretch occupies residues 466–513 (RANKAVRKQKQRKSNKMKMETTKGQSMNHTSATRRKKRRERAHQYLGS). Residues 487–496 (TKGQSMNHTS) are compositionally biased toward polar residues. The segment covering 497–506 (ATRRKKRRER) has biased composition (basic residues).

This sequence belongs to the ZCCHC4 family. In terms of assembly, interacts with components of the ASC-1 complex TRIP4, ASCC1, ASCC2 and ASCC3. Interact with AHCYL1 and AHCYL2. Interact with YTHDC2.

It localises to the nucleus. The protein localises to the nucleolus. It is found in the cytoplasm. The catalysed reaction is adenosine(4220) in 28S rRNA + S-adenosyl-L-methionine = N(6)-methyladenosine(4220) in 28S rRNA + S-adenosyl-L-homocysteine + H(+). Functionally, rRNA N6-methyltransferase that specifically methylates the adenine in position 4220 of 28S rRNA. N6-methylation of adenine(4220) in 28S rRNA is required for translation. The chain is rRNA N(6)-adenosine-methyltransferase ZCCHC4 from Homo sapiens (Human).